A 184-amino-acid polypeptide reads, in one-letter code: Ribosome-recycling factor (184 aa).

It belongs to the RRF family.

Its subcellular location is the cytoplasm. Its function is as follows. Responsible for the release of ribosomes from messenger RNA at the termination of protein biosynthesis. May increase the efficiency of translation by recycling ribosomes from one round of translation to another. This chain is Ribosome-recycling factor, found in Hyphomonas neptunium (strain ATCC 15444).